The primary structure comprises 344 residues: Phenylalanine--tRNA ligase alpha subunit (344 aa).

Mg(2+) is bound at residue glutamate 261.

It belongs to the class-II aminoacyl-tRNA synthetase family. Phe-tRNA synthetase alpha subunit type 1 subfamily. Tetramer of two alpha and two beta subunits. Mg(2+) is required as a cofactor.

It localises to the cytoplasm. The enzyme catalyses tRNA(Phe) + L-phenylalanine + ATP = L-phenylalanyl-tRNA(Phe) + AMP + diphosphate + H(+). This Ehrlichia ruminantium (strain Gardel) protein is Phenylalanine--tRNA ligase alpha subunit.